Reading from the N-terminus, the 402-residue chain is Phosphoglycerate kinase (402 aa).

Residues 24 to 26 (DFN), arginine 41, 64 to 67 (HMGR), arginine 123, and arginine 156 contribute to the substrate site. Residues lysine 207, glycine 298, glutamate 329, and 358–361 (GGDS) contribute to the ATP site.

The protein belongs to the phosphoglycerate kinase family. As to quaternary structure, monomer.

The protein localises to the cytoplasm. The catalysed reaction is (2R)-3-phosphoglycerate + ATP = (2R)-3-phospho-glyceroyl phosphate + ADP. It participates in carbohydrate degradation; glycolysis; pyruvate from D-glyceraldehyde 3-phosphate: step 2/5. This chain is Phosphoglycerate kinase, found in Microcystis aeruginosa (strain NIES-843 / IAM M-2473).